Consider the following 165-residue polypeptide: Phosphopantetheine adenylyltransferase (165 aa).

Residue Thr-10 coordinates substrate. ATP-binding positions include 10–11 (TF) and His-18. Substrate contacts are provided by Lys-42, Leu-74, and Arg-88. Residues 89-91 (GLR), Glu-99, and 124-130 (NAFISSS) contribute to the ATP site.

Belongs to the bacterial CoaD family. As to quaternary structure, homohexamer. Mg(2+) is required as a cofactor.

It is found in the cytoplasm. The enzyme catalyses (R)-4'-phosphopantetheine + ATP + H(+) = 3'-dephospho-CoA + diphosphate. It functions in the pathway cofactor biosynthesis; coenzyme A biosynthesis; CoA from (R)-pantothenate: step 4/5. Functionally, reversibly transfers an adenylyl group from ATP to 4'-phosphopantetheine, yielding dephospho-CoA (dPCoA) and pyrophosphate. This chain is Phosphopantetheine adenylyltransferase, found in Helicobacter hepaticus (strain ATCC 51449 / 3B1).